We begin with the raw amino-acid sequence, 288 residues long: MAGEQTTTEYISHHLTNWTYGYLPGEGWKVAYTAEEASAMGFKAIHLDSMLWSIGLGIVFCAIFWMVARKVTSGVPGKLQAAVEMIIEFVDNNVRDSYSGTSKLIAPLALTIFVWIFLMNLMDLLPVDFVPGLAGQIGAMMGHDPHHVFFKIVPTTDPNITLGMSFSVFILILFYSIKEKGLGGFVGELTLHPFSAKNPIVQIILIPINFILEFVTLIAKPISLGLRLFGNMYAGELIFILIALMPFWIQWALSVPWAIFHILIITLQAFVFMMLTIVYMSLASSTEH.

6 helical membrane passes run 47-67 (LDSM…FWMV), 104-124 (LIAP…LMDL), 157-177 (DPNI…FYSI), 199-219 (PIVQ…TLIA), 237-257 (LIFI…SVPW), and 258-278 (AIFH…LTIV).

Belongs to the ATPase A chain family. F-type ATPases have 2 components, CF(1) - the catalytic core - and CF(0) - the membrane proton channel. CF(1) has five subunits: alpha(3), beta(3), gamma(1), delta(1), epsilon(1). CF(0) has three main subunits: a(1), b(2) and c(9-12). The alpha and beta chains form an alternating ring which encloses part of the gamma chain. CF(1) is attached to CF(0) by a central stalk formed by the gamma and epsilon chains, while a peripheral stalk is formed by the delta and b chains.

The protein localises to the cell inner membrane. Functionally, key component of the proton channel; it plays a direct role in the translocation of protons across the membrane. This is ATP synthase subunit a from Psychrobacter arcticus (strain DSM 17307 / VKM B-2377 / 273-4).